The chain runs to 326 residues: Ras association domain-containing protein 2 (326 aa).

Residues 176–264 enclose the Ras-associating domain; sequence YNHKTSVFTP…SKVFLMEKDQ (89 aa). The SARAH domain occupies 272–319; it reads VAQYIKFEMPVLKSFIQKLQEEEDREVEKLMRKYTVLRLMIRQRLEEI.

As to quaternary structure, interacts directly with activated KRAS in a GTP-dependent manner. Interacts (via SARAH domain) with STK3/MST2 and STK4/MST1. In terms of processing, phosphorylated by STK3/MST2 and STK4/MST1.

It localises to the nucleus. It is found in the cytoplasm. Its subcellular location is the chromosome. The protein localises to the centromere. The protein resides in the kinetochore. Functionally, potential tumor suppressor. Acts as a KRAS-specific effector protein. May promote apoptosis and cell cycle arrest. Stabilizes STK3/MST2 by protecting it from proteasomal degradation. The sequence is that of Ras association domain-containing protein 2 (Rassf2) from Mus musculus (Mouse).